The sequence spans 274 residues: Penicillin-insensitive murein endopeptidase (274 aa).

An N-terminal signal peptide occupies residues M1 to A19. Intrachain disulfides connect C44–C265, C187–C235, and C216–C223. Residues H110, H113, D120, D147, H150, and H211 each contribute to the Zn(2+) site. The segment at E224–P263 is disordered. Over residues P245 to P263 the composition is skewed to pro residues.

It belongs to the peptidase M74 family. As to quaternary structure, dimer. It depends on Zn(2+) as a cofactor.

The protein resides in the periplasm. Murein endopeptidase that cleaves the D-alanyl-meso-2,6-diamino-pimelyl amide bond that connects peptidoglycan strands. Likely plays a role in the removal of murein from the sacculus. The protein is Penicillin-insensitive murein endopeptidase of Klebsiella pneumoniae (strain 342).